Consider the following 410-residue polypeptide: MGQDFSRFRVVDMTGELGPYTAKMFAGLGADVIHVESPAGDPLRRVGPWFRNQPGVQASLPYLYYNAGKRGFAVDLEHEAGREVFRTLCSGADLLVESCRPGYLDGLGLSYEELSRDNARLVQTSVTPFGRTGPLAAYPGSDLTCSALSGFLWLAGIDGDKPVRAPDNQAYRMAEAYAAVGSAIALFSAQRTGKGQLVDVACIEAEAMALENAAQFWDLEGKIRRGRGREAGSATLHPCADGYIALVAIMGRNKDMWTPFVRWMEAEGVEEWPLFDDDKWIDYAYRTSEEGYTTFCRVFERYTRSRSKAELYEIGQRFNVAVTPVSDGRDLLANPQLAHREFWQTQFNDTLGADITYPGAPYEFGELQWQLGRNAPRIGEHTREILVECGYPAFEIDNLLRMGAVYAEQH.

Belongs to the CoA-transferase III family. As to quaternary structure, heterotetramer composed of 2 BbsE subunits and 2 BbsF subunits.

It catalyses the reaction (R)-2-benzylsuccinate + succinyl-CoA = (R)-2-benzylsuccinyl-CoA + succinate. The protein operates within xenobiotic degradation; toluene degradation. Inhibited by (S)-benzylsuccinyl-CoA. In terms of biological role, catalyzes the reversible conversion of (R)-2-benzylsuccinate to (R)-2-benzylsuccinyl-CoA. Inactive with (S)-benzylsuccinate. The polypeptide is Succinyl-CoA:(R)-benzylsuccinate CoA-transferase subunit BbsE (bbsE) (Thauera aromatica).